We begin with the raw amino-acid sequence, 361 residues long: Chorismate synthase (361 aa).

The NADP(+) site is built by arginine 48 and arginine 54. FMN contacts are provided by residues 125–127 (RSS), 238–239 (NA), glycine 278, 293–297 (KPTSS), and arginine 319.

The protein belongs to the chorismate synthase family. Homotetramer. Requires FMNH2 as cofactor.

The catalysed reaction is 5-O-(1-carboxyvinyl)-3-phosphoshikimate = chorismate + phosphate. Its pathway is metabolic intermediate biosynthesis; chorismate biosynthesis; chorismate from D-erythrose 4-phosphate and phosphoenolpyruvate: step 7/7. Functionally, catalyzes the anti-1,4-elimination of the C-3 phosphate and the C-6 proR hydrogen from 5-enolpyruvylshikimate-3-phosphate (EPSP) to yield chorismate, which is the branch point compound that serves as the starting substrate for the three terminal pathways of aromatic amino acid biosynthesis. This reaction introduces a second double bond into the aromatic ring system. The sequence is that of Chorismate synthase from Vibrio vulnificus (strain CMCP6).